We begin with the raw amino-acid sequence, 566 residues long: Tetratricopeptide repeat protein 34 (566 aa).

The segment at 1–29 (MLQRSPRAGPSRAQGRREAAETGGPTTQE) is disordered. TPR repeat units follow at residues 50 to 83 (EASRLLAADALYRLGRLEETHKALLVALSRRPQA), 178 to 211 (SESLLARARCYGFLGQKKTAMFDFNTVLRAEPGN), 212 to 245 (VQALCGRALVHLALDQLQEAVDDIVSALKLGPGT), 306 to 339 (PHWHLLLADILMAQGSYEEAGTHLEKALHRAPTS), 341 to 373 (AARARLGLLQLKKGDVPGAARDLQSLAEVDAPD), 424 to 457 (ACHLRLRATCLAELQEFGRALRDLDHVLQEALGD), 464 to 497 (AEDFCRQGRLLLSLGDEAAAAGAFAQALKLAPSL), and 512 to 545 (ARMFLLRGQCCLEEQRHAEAWTAVESGLLVDPDH).

This Homo sapiens (Human) protein is Tetratricopeptide repeat protein 34 (TTC34).